A 115-amino-acid chain; its full sequence is Parathyroid hormone (115 aa).

The first 25 residues, 1–25 (MIPAKDMAKVMIVMLAICFLTKSDG), serve as a signal peptide directing secretion. Residues 26–31 (KSVKKR) constitute a propeptide that is removed on maturation. Positions 51 to 69 (RVEWLRKKLQDVHNFIALG) are important for receptor binding. Positions 72 to 96 (LAPRDAGSQRPRKKEDNILVESHEK) are disordered. Positions 84-96 (KKEDNILVESHEK) are enriched in basic and acidic residues.

This sequence belongs to the parathyroid hormone family. In terms of assembly, interacts with PTH1R (via N-terminal extracellular domain).

It localises to the secreted. Functionally, parathyroid hormone elevates calcium level by dissolving the salts in bone and preventing their renal excretion. Acts by binding to its receptor, PTH1R, activating G protein-coupled receptor signaling. Stimulates [1-14C]-2-deoxy-D-glucose (2DG) transport and glycogen synthesis in osteoblastic cells. This Macaca fascicularis (Crab-eating macaque) protein is Parathyroid hormone (PTH).